A 311-amino-acid polypeptide reads, in one-letter code: Acetyl-coenzyme A carboxylase carboxyl transferase subunit alpha (311 aa).

In terms of domain architecture, CoA carboxyltransferase C-terminal spans 32–289; it reads ELNLLEERLR…KSVLEQKLAQ (258 aa).

It belongs to the AccA family. As to quaternary structure, acetyl-CoA carboxylase is a heterohexamer composed of biotin carboxyl carrier protein (AccB), biotin carboxylase (AccC) and two subunits each of ACCase subunit alpha (AccA) and ACCase subunit beta (AccD).

Its subcellular location is the cytoplasm. It catalyses the reaction N(6)-carboxybiotinyl-L-lysyl-[protein] + acetyl-CoA = N(6)-biotinyl-L-lysyl-[protein] + malonyl-CoA. It participates in lipid metabolism; malonyl-CoA biosynthesis; malonyl-CoA from acetyl-CoA: step 1/1. Component of the acetyl coenzyme A carboxylase (ACC) complex. First, biotin carboxylase catalyzes the carboxylation of biotin on its carrier protein (BCCP) and then the CO(2) group is transferred by the carboxyltransferase to acetyl-CoA to form malonyl-CoA. The chain is Acetyl-coenzyme A carboxylase carboxyl transferase subunit alpha from Exiguobacterium sibiricum (strain DSM 17290 / CCUG 55495 / CIP 109462 / JCM 13490 / 255-15).